Here is a 44-residue protein sequence, read N- to C-terminus: Photosystem I reaction center subunit IX (44 aa).

A helical membrane pass occupies residues 7–27 (YLSVAPVLATLWFGSLAGLLI).

This sequence belongs to the PsaJ family.

The protein localises to the plastid. It localises to the chloroplast thylakoid membrane. Functionally, may help in the organization of the PsaE and PsaF subunits. The protein is Photosystem I reaction center subunit IX of Piper cenocladum (Ant piper).